Here is a 720-residue protein sequence, read N- to C-terminus: Protein unc-112 (720 aa).

Disordered stretches follow at residues 145–170 (DLRR…ESVG) and 210–236 (MGTL…TMRR). The region spanning 288-614 (WLDSSRSLME…ALPEHGIHYF (327 aa)) is the FERM domain. A PH domain is found at 402–507 (VPELADYLKY…WMAACRLASR (106 aa)).

Belongs to the kindlin family. In terms of assembly, interacts with pat-4/ILK. Probably forms a complex with pat-4 and pat-6. Component of an integrin containing attachment complex, composed of at least pat-2, pat-3, pat-4, pat-6, unc-52, unc-97 and unc-112. In terms of tissue distribution, mainly expressed in muscle cells in both embryos and adults.

It localises to the cell membrane. The protein localises to the cytoplasm. It is found in the myofibril. The protein resides in the sarcomere. Its subcellular location is the m line. Its function is as follows. Component of an integrin containing attachment complex, which is required for muscle development and maintenance. Probable regulator of cell-extracellular matrix adhesion. Required during initial muscle assembly to form dense bodies and M-lines. This is Protein unc-112 from Caenorhabditis elegans.